Reading from the N-terminus, the 321-residue chain is Transcriptional activator protein Pur-alpha (321 aa).

The interval 1 to 54 (MADRDSGSEQGGAALGSGGSLGHPGSGSGSGGGGGGGGGGGGSGGGGGAPGGLQ) is disordered. At alanine 2 the chain carries N-acetylalanine. Over residues 9–51 (EQGGAALGSGGSLGHPGSGSGSGGGGGGGGGGGGSGGGGGAPG) the composition is skewed to gly residues. Serine 181 carries the phosphoserine modification. Residues 294–313 (LHQQQQQQQEETTAATLLLQ) are compositionally biased toward low complexity. Positions 294–321 (LHQQQQQQQEETTAATLLLQGEEEGEED) are disordered.

The protein belongs to the PUR DNA-binding protein family. In terms of assembly, homodimer, heterodimer with PURB and heterotrimer with PURB and YBX1/Y-box protein 1. Interacts with FMR1; this interaction occurs in association with polyribosome.

It is found in the nucleus. This is a probable transcription activator that specifically binds the purine-rich single strand of the PUR element located upstream of the c-Myc gene. May play a role in the initiation of DNA replication and in recombination. The polypeptide is Transcriptional activator protein Pur-alpha (Pura) (Mus musculus (Mouse)).